Reading from the N-terminus, the 274-residue chain is MPELPEVETTKQGIKPHLEGCMITSVQVRNQKLRLPVPLNLNELCEGKHITAITRRGKYILLHMDKGYLLIHLGMSGHLRIVSQTANPQKHDHVDLHINNGLALRFRDPRRFGLFIYIDENPYQHPLLAHLGPEPLSDDFNSEYLLRKAANKSQSIKSFIMDSQIVVGIGNIYAAESLFLAKIHPNTSAKKITTEEFNSLTGHIKKILESAIEAGGTTLRDFYSSDGKPGYFRFALKVYGRKNLPCLVCENKIETVVIAGRHSAFCPHCQPIIT.

Catalysis depends on Pro-2, which acts as the Schiff-base intermediate with DNA. Glu-3 acts as the Proton donor in catalysis. Lys-58 acts as the Proton donor; for beta-elimination activity in catalysis. His-91, Arg-110, and Lys-152 together coordinate DNA. The FPG-type zinc finger occupies 237 to 271; the sequence is KVYGRKNLPCLVCENKIETVVIAGRHSAFCPHCQP. The active-site Proton donor; for delta-elimination activity is the Arg-261.

It belongs to the FPG family. In terms of assembly, monomer. Zn(2+) is required as a cofactor.

It carries out the reaction Hydrolysis of DNA containing ring-opened 7-methylguanine residues, releasing 2,6-diamino-4-hydroxy-5-(N-methyl)formamidopyrimidine.. The catalysed reaction is 2'-deoxyribonucleotide-(2'-deoxyribose 5'-phosphate)-2'-deoxyribonucleotide-DNA = a 3'-end 2'-deoxyribonucleotide-(2,3-dehydro-2,3-deoxyribose 5'-phosphate)-DNA + a 5'-end 5'-phospho-2'-deoxyribonucleoside-DNA + H(+). Its function is as follows. Involved in base excision repair of DNA damaged by oxidation or by mutagenic agents. Acts as a DNA glycosylase that recognizes and removes damaged bases. Has a preference for oxidized purines, such as 7,8-dihydro-8-oxoguanine (8-oxoG). Has AP (apurinic/apyrimidinic) lyase activity and introduces nicks in the DNA strand. Cleaves the DNA backbone by beta-delta elimination to generate a single-strand break at the site of the removed base with both 3'- and 5'-phosphates. The protein is Formamidopyrimidine-DNA glycosylase of Legionella pneumophila (strain Lens).